The primary structure comprises 52 residues: Lantibiotic epidermin (52 aa).

The propeptide occupies 1–30 (MEAVKEKNDLFNLDVKVNAKESNDSGAEPR). A cross-link (lanthionine (Ser-Cys)) is located at residues 33 to 37 (SKFIC). The beta-methyllanthionine (Thr-Cys) cross-link spans 38-41 (TPGC). (Z)-2,3-didehydrobutyrine is present on Thr44. Positions 46-51 (SFNSYC) form a cross-link, lanthionine (Ser-Cys). A cross-link (S-(2-aminovinyl)-D-cysteine (Ser-Cys)) is located at residues 49 to 52 (SYCC).

Belongs to the type A lantibiotic family. In terms of processing, maturation of lantibiotics involves the enzymatic conversion of Thr, and Ser into dehydrated AA and the formation of thioether bonds with cysteine. The C-terminal lanthionine undergoes decarboxylation. This is followed by membrane translocation and cleavage of the modified precursor. The 2,3-didehydrobutyrine is determined to be the Z-isomer.

Its function is as follows. Lanthionine-containing peptide antibiotic (lantibiotic) active on Gram-positive bacteria. The bactericidal activity of lantibiotics is based on depolarization of energized bacterial cytoplasmic membranes, initiated by the formation of aqueous transmembrane pores. The protein is Lantibiotic epidermin (epiA) of Staphylococcus epidermidis.